Here is a 218-residue protein sequence, read N- to C-terminus: Type II restriction enzyme KpnI (218 aa).

The enzyme catalyses Endonucleolytic cleavage of DNA to give specific double-stranded fragments with terminal 5'-phosphates.. Functionally, a P subtype restriction enzyme that recognizes the double-stranded sequence 5'-GGTACC-3' and cleaves after C-5. This is Type II restriction enzyme KpnI from Klebsiella pneumoniae.